The sequence spans 200 residues: MEQLPSNLQVLLQAAEYVERREREAEHGYASILPCDPATPGRRKRQRTNSNPDNVRSVHNELEKHRRAQLRRCLEQLKQQVPLSMENSRHTTLSLLHRAKQHIKKLEDQELRAKSLKEKLRVEQQKLRQRLKQLLPPNTERIRTDSLDSSTLSSERSDSDQEDLEVDVEGIILSGNEGELFVSFSAGLEHSYSTPAHAWL.

2 disordered regions span residues 26-56 (EHGYASILPCDPATPGRRKRQRTNSNPDNVR) and 134-164 (LLPPNTERIRTDSLDSSTLSSERSDSDQEDL). A bHLH domain is found at 54 to 106 (NVRSVHNELEKHRRAQLRRCLEQLKQQVPLSMENSRHTTLSLLHRAKQHIKKL).

As to quaternary structure, efficient DNA binding requires dimerization with another bHLH protein. Binds DNA as a heterodimer with MAX.

The protein localises to the nucleus. Functionally, transcriptional repressor. Binds with MAX to form a sequence-specific DNA-binding protein complex which recognizes the core sequence 5'-CAC[GA]TG-3'. This chain is Max dimerization protein 3 (mxd3), found in Xenopus tropicalis (Western clawed frog).